The primary structure comprises 288 residues: Zinc finger protein 42 (288 aa).

2 stretches are compositionally biased toward basic and acidic residues: residues 1 to 11 and 26 to 38; these read MNEQKMNEQMK and ALDR…DEAR. The interval 1-48 is disordered; sequence MNEQKMNEQMKKTAKTSGQKGPGGRALDRLTLKQDEARPVQNTRVEAP. 4 C2H2-type zinc fingers span residues 170-194, 199-221, 227-251, and 258-281; these read LECP…MLVH, HVCA…FLVH, YQCT…IRIH, and VCPF…ILTH. Glycyl lysine isopeptide (Lys-Gly) (interchain with G-Cter in ubiquitin) cross-links involve residues Lys-213 and Lys-215.

Belongs to the krueppel C2H2-type zinc-finger protein family. Polyubiquitinated by RNF12, leading to proteasomal degradation. In terms of tissue distribution, restricted to testis, to germ cells in the early stages of spermatogenesis. Not expressed in spermatids, nor spermatozoa. Expressed in embryonic stem (ES) cells.

The protein localises to the nucleus. Functionally, involved in the reprogramming of X-chromosome inactivation during the acquisition of pluripotency. Required for efficient elongation of TSIX, a non-coding RNA antisense to XIST. Binds DXPas34 enhancer within the TSIX promoter. Involved in ES cell self-renewal. The sequence is that of Zinc finger protein 42 (Zfp42) from Mus musculus (Mouse).